Consider the following 213-residue polypeptide: Imidazole glycerol phosphate synthase subunit HisH 1 (213 aa).

One can recognise a Glutamine amidotransferase type-1 domain in the interval serine 3 to isoleucine 213. The Nucleophile role is filled by cysteine 81. Residues histidine 195 and glutamate 197 contribute to the active site.

Heterodimer of HisH and HisF.

The protein localises to the cytoplasm. The catalysed reaction is 5-[(5-phospho-1-deoxy-D-ribulos-1-ylimino)methylamino]-1-(5-phospho-beta-D-ribosyl)imidazole-4-carboxamide + L-glutamine = D-erythro-1-(imidazol-4-yl)glycerol 3-phosphate + 5-amino-1-(5-phospho-beta-D-ribosyl)imidazole-4-carboxamide + L-glutamate + H(+). It carries out the reaction L-glutamine + H2O = L-glutamate + NH4(+). It functions in the pathway amino-acid biosynthesis; L-histidine biosynthesis; L-histidine from 5-phospho-alpha-D-ribose 1-diphosphate: step 5/9. In terms of biological role, IGPS catalyzes the conversion of PRFAR and glutamine to IGP, AICAR and glutamate. The HisH subunit provides the glutamine amidotransferase activity that produces the ammonia necessary to HisF for the synthesis of IGP and AICAR. The polypeptide is Imidazole glycerol phosphate synthase subunit HisH 1 (Legionella pneumophila (strain Lens)).